We begin with the raw amino-acid sequence, 127 residues long: Major sperm protein 2 (127 aa).

A2 bears the N-acetylalanine mark. The region spanning 9–126 (DIHTQPGSKI…RRKNLPIEYN (118 aa)) is the MSP domain.

Sperm.

The protein resides in the cell projection. The protein localises to the pseudopodium. Its subcellular location is the cytoplasm. It is found in the cytoskeleton. In terms of biological role, central component in molecular interactions underlying sperm crawling. Forms an extensive filament system that extends from sperm villipoda, along the leading edge of the pseudopod. The sequence is that of Major sperm protein 2 from Onchocerca volvulus.